We begin with the raw amino-acid sequence, 468 residues long: MTHRTRFAPSPTGHLHIGGARTALFSWLYARKHGGTFILRIEDTDLERSTVESVNAILEGMTWLGLEYDEGPFYQTHRFDRYREVMEQLLEEGHAYRCYCTKEELDELRAGQMERKEKPRYDGRCRHRSEPRPGVLPVIRFRNPTEGEVAWDDLVRGRIAFQNSELDDLIIARSDGTPTYNFTVVVDDLDMKISHVIRGDDHVNNTPRQINILKALGVEPPRYGHVPMILGADGARLSKRHGAVSVMQYRDEGYLPEALLNYLVRLGWSHGDQEIFSVDEMIEYFDANAINHSAATFNPDKLLWLNHHYLMHSDPAHVAHHLRWHLGRLDIDPTEGPDPVDVVVAQRERCKTLVEMAQASRFFYRDFDDYDPKSAQKYLTAASVPALESLRRHLAVVRSWEKEFLHAVLVATGEEMGLKLGAVAQPLRVAVAGTAVSPPMDVTLHLLGQLRTLNRIDRALQYIEAKKD.

Positions 9–19 match the 'HIGH' region motif; it reads PSPTGHLHIGG. Residues cysteine 98, cysteine 100, cysteine 125, and histidine 127 each coordinate Zn(2+). The short motif at 236–240 is the 'KMSKS' region element; sequence RLSKR. Lysine 239 serves as a coordination point for ATP.

Belongs to the class-I aminoacyl-tRNA synthetase family. Glutamate--tRNA ligase type 1 subfamily. Monomer. Zn(2+) serves as cofactor.

Its subcellular location is the cytoplasm. The enzyme catalyses tRNA(Glu) + L-glutamate + ATP = L-glutamyl-tRNA(Glu) + AMP + diphosphate. In terms of biological role, catalyzes the attachment of glutamate to tRNA(Glu) in a two-step reaction: glutamate is first activated by ATP to form Glu-AMP and then transferred to the acceptor end of tRNA(Glu). The sequence is that of Glutamate--tRNA ligase 2 from Methylococcus capsulatus (strain ATCC 33009 / NCIMB 11132 / Bath).